Reading from the N-terminus, the 150-residue chain is MALKPPSATQPAPNAPATPDAPPTTGDPGASAAPGSPTTTGGPGAPAEVPQEPQEPTQTPEELAFYAPNYLCLTIFAILLFPPFGLAALYFSYEGSWTQKPTSMLPPLQTMKANQNSEWEEAYINSGRTGWFGAFVVMIGLGIIYGLVLY.

The segment covering 1-12 (MALKPPSATQPA) has biased composition (low complexity). The segment at 1–61 (MALKPPSATQ…EPQEPTQTPE (61 aa)) is disordered. Residues 13–22 (PNAPATPDAP) are compositionally biased toward pro residues. Over residues 23–61 (PTTGDPGASAAPGSPTTTGGPGAPAEVPQEPQEPTQTPE) the composition is skewed to low complexity. The next 2 membrane-spanning stretches (helical) occupy residues 71-91 (LCLTIFAILLFPPFGLAALYF) and 130-150 (GWFGAFVVMIGLGIIYGLVLY).

It belongs to the CD225/Dispanin family.

Its subcellular location is the membrane. Its function is as follows. May play a role in spermatozoa mobility. This Homo sapiens (Human) protein is Transmembrane protein PMIS2.